A 583-amino-acid polypeptide reads, in one-letter code: Aspartate--tRNA ligase (583 aa).

An L-aspartate-binding site is contributed by E174. Residues 198–201 (QITK) form an aspartate region. L-aspartate is bound at residue R220. Residues 220–222 (RDE) and Q229 each bind ATP. Position 443 (H443) interacts with L-aspartate. E477 lines the ATP pocket. R484 contacts L-aspartate. 529 to 532 (GLDR) contacts ATP.

Belongs to the class-II aminoacyl-tRNA synthetase family. Type 1 subfamily. In terms of assembly, homodimer.

The protein resides in the cytoplasm. It catalyses the reaction tRNA(Asp) + L-aspartate + ATP = L-aspartyl-tRNA(Asp) + AMP + diphosphate. Catalyzes the attachment of L-aspartate to tRNA(Asp) in a two-step reaction: L-aspartate is first activated by ATP to form Asp-AMP and then transferred to the acceptor end of tRNA(Asp). In Streptococcus agalactiae serotype V (strain ATCC BAA-611 / 2603 V/R), this protein is Aspartate--tRNA ligase.